Reading from the N-terminus, the 142-residue chain is Small ribosomal subunit protein uS12 (142 aa).

Residues 1 to 44 (MANGKYAARKLKKDRQKHRWSDTDYARRERGLGKKSDPLEGAPQ) form a disordered region. Residues 7–18 (AARKLKKDRQKH) show a composition bias toward basic residues. A compositionally biased stretch (basic and acidic residues) spans 19 to 38 (RWSDTDYARRERGLGKKSDP).

This sequence belongs to the universal ribosomal protein uS12 family. In terms of assembly, part of the 30S ribosomal subunit.

With S4 and S5 plays an important role in translational accuracy. Located at the interface of the 30S and 50S subunits. The protein is Small ribosomal subunit protein uS12 of Haloarcula marismortui (strain ATCC 43049 / DSM 3752 / JCM 8966 / VKM B-1809) (Halobacterium marismortui).